The sequence spans 49 residues: Disintegrin echistatin-gamma (49 aa).

A Disintegrin domain is found at 1 to 47 (DCASGPCCRDCKFLEEGTICNMARGDDMDDYCNGKTCDCPRNPHKWP). 4 disulfide bridges follow: C2-C11, C7-C32, C8-C37, and C20-C39. The short motif at 24–26 (RGD) is the Cell attachment site element.

Belongs to the venom metalloproteinase (M12B) family. P-II subfamily. P-IIa sub-subfamily. As to quaternary structure, monomer. In terms of tissue distribution, expressed by the venom gland.

The protein localises to the secreted. Its function is as follows. Has antiplatelet activities on guinea pig, followed by human, rabbit and rat platelet-rich plasma. This Echis pyramidum leakeyi (Leakey's carpet viper) protein is Disintegrin echistatin-gamma.